We begin with the raw amino-acid sequence, 548 residues long: Membrane protein insertase YidC (548 aa).

Residues 6 to 26 form a helical membrane-spanning segment; sequence NLLVIALLFVSFMIWQAWEQD. Positions 28-56 are disordered; that stretch reads NPQPQTQQTTQTTTTAAGSAADQGVPASG. Over residues 29 to 42 the composition is skewed to low complexity; that stretch reads PQPQTQQTTQTTTT. 4 helical membrane passes run 350–370, 424–444, 458–478, and 499–519; these read FVGNWGFSIIIITFIVRGIMY, FPLIIQMPIFLALYYMLMGSI, LSAQDPYYILPILMGVTMFFI, and PVIFTVFFLWFPSGLVLYYIV.

This sequence belongs to the OXA1/ALB3/YidC family. Type 1 subfamily. In terms of assembly, interacts with the Sec translocase complex via SecD. Specifically interacts with transmembrane segments of nascent integral membrane proteins during membrane integration.

It is found in the cell inner membrane. Required for the insertion and/or proper folding and/or complex formation of integral membrane proteins into the membrane. Involved in integration of membrane proteins that insert both dependently and independently of the Sec translocase complex, as well as at least some lipoproteins. Aids folding of multispanning membrane proteins. The sequence is that of Membrane protein insertase YidC from Salmonella enteritidis PT4 (strain P125109).